A 443-amino-acid chain; its full sequence is Leucine-rich repeat-containing protein 17 (443 aa).

The N-terminal stretch at 1–15 is a signal peptide; it reads MRIVAILLLFCLCRA. The tract at residues 20-48 is disordered; it reads KSSPGVLRSQGNPSRSHGRGGRRGSSPVK. 3 LRR repeats span residues 84–105, 108–129, and 132–153; these read DLLH…MFAK, RLKS…AFFG, and KLTT…AFIY. The LRRCT 1 domain occupies 165–216; sequence NPWHCTCELETLISMLQIPRNRNLGNYAKCGSPPALRNKKLLQLKPQELCDE. Residues 229–270 enclose the LRRNT domain; sequence SGIPAVIRPEADSTLCHNYVFPIQTLDCKRKELKKVPSNIPP. 3 LRR repeats span residues 271 to 292, 295 to 316, and 319 to 342; these read DIVK…EFED, ELKK…AFLG, and HLEE…EDLY. The region spanning 352–404 is the LRRCT 2 domain; the sequence is NPWRCDYSIHYLYYWLKHHYNVHYNGLECKTPEEYKGWSVGKYVRSYYEECPK.

As to expression, expressed in osteoblasts, spleen, lung and heart.

It is found in the secreted. It localises to the extracellular space. Involved in bone homeostasis. Acts as a negative regulator of RANKL-induced osteoclast precursor differentiation from bone marrow precursors. The polypeptide is Leucine-rich repeat-containing protein 17 (Lrrc17) (Mus musculus (Mouse)).